The following is a 241-amino-acid chain: Spiralin (241 aa).

Positions 1–23 (MKKLLSILAVFGVSAVGTTSVVA) are cleaved as a signal peptide. Cys24 carries the N-palmitoyl cysteine lipid modification. A lipid anchor (S-diacylglycerol cysteine) is attached at Cys24.

The protein belongs to the spiralin family. As to quaternary structure, seems to occur as dimer, tetramers, and large oligomers of identical chains. Palmitate and stearate are the major lipid components.

It is found in the cell membrane. In terms of biological role, major membrane protein of spiroplasma. In Spiroplasma citri, this protein is Spiralin (spi).